Consider the following 164-residue polypeptide: MMNHKELVLFAVVCLSLYQAVEPSQDVVKDMSLNFRKGLDACKKELNLPDTINSDFNRFWNDDHVVTNRDTGCAIMCLSSKLELVSDTGLHHGNTLEYAKQHGADDTVAQQIVDLLHSCAQAVPDLEDPCLKVLEWAKCFKAEIHKLNWAPSAEVMAAEMLAEV.

A signal peptide spans 1–23 (MMNHKELVLFAVVCLSLYQAVEP). 3 disulfides stabilise this stretch: cysteine 42/cysteine 77, cysteine 73/cysteine 130, and cysteine 119/cysteine 139.

This sequence belongs to the PBP/GOBP family. Monomer and disulfide-linked dimers. As to expression, antenna.

Functionally, this major soluble protein in olfactory sensilla of male moths serves to solubilize the extremely hydrophobic pheromone molecules such as bombykol and to transport pheromone through the aqueous lymph to receptors located on olfactory cilia. The protein is Pheromone-binding protein 2 (PBP) of Epiphyas postvittana (Light brown apple moth).